The sequence spans 545 residues: Probable acyl-activating enzyme 4 (545 aa).

Belongs to the ATP-dependent AMP-binding enzyme family. Expressed in roots, leaves, stems, flowers and developing seeds.

Functionally, may act as an acid--thiol ligase that activates carboxylic acids by forming acyl-CoAs. The polypeptide is Probable acyl-activating enzyme 4 (AEE4) (Arabidopsis thaliana (Mouse-ear cress)).